The chain runs to 396 residues: S-adenosylmethionine synthase 4 (396 aa).

Mg(2+) is bound at residue Glu-12. His-18 contributes to the ATP binding site. Glu-46 serves as a coordination point for K(+). Glu-59 and Gln-102 together coordinate L-methionine. ATP-binding positions include 170 to 172 (DGK), 238 to 241 (SGRF), Asp-249, 255 to 256 (RK), Ala-272, Lys-276, and Lys-280. Asp-249 contacts L-methionine. Residue Lys-280 participates in L-methionine binding.

The protein belongs to the AdoMet synthase family. In terms of assembly, homotetramer. Requires Mn(2+) as cofactor. It depends on Mg(2+) as a cofactor. Co(2+) is required as a cofactor. K(+) serves as cofactor.

It is found in the cytoplasm. The enzyme catalyses L-methionine + ATP + H2O = S-adenosyl-L-methionine + phosphate + diphosphate. The protein operates within amino-acid biosynthesis; S-adenosyl-L-methionine biosynthesis; S-adenosyl-L-methionine from L-methionine: step 1/1. In terms of biological role, catalyzes the formation of S-adenosylmethionine from methionine and ATP. The reaction comprises two steps that are both catalyzed by the same enzyme: formation of S-adenosylmethionine (AdoMet) and triphosphate, and subsequent hydrolysis of the triphosphate. The sequence is that of S-adenosylmethionine synthase 4 (SAM4) from Hordeum vulgare (Barley).